We begin with the raw amino-acid sequence, 1142 residues long: E3 ubiquitin-protein ligase TRIM33 (1142 aa).

The segment covering Met1–Gly18 has biased composition (gly residues). Residues Met1–Gly132 form a disordered region. The interval Met1–His163 is necessary for E3 ubiquitin-protein ligase activity and repression of SMAD4 signaling and transcriptional repression. Residues Ser19–Leu42 are compositionally biased toward low complexity. A compositionally biased stretch (gly residues) spans Arg52–Asp64. Low complexity predominate over residues Gly65–Pro99. Pro residues predominate over residues Ala100–Ala122. The segment at Cys141 to Arg201 adopts an RING-type zinc-finger fold. 2 consecutive B box-type zinc fingers follow at residues Lys228 to Lys275 and Gln287 to Leu328. The Zn(2+) site is built by Cys233, Cys236, Cys257, His261, Cys292, His295, Cys315, and His320. Residues Cys315–Asp417 form a necessary for oligomerization region. A coiled-coil region spans residues Cys315–Asp417. Residues Lys345, Lys350, Lys497, and Lys520 each participate in a glycyl lysine isopeptide (Lys-Gly) (interchain with G-Cter in SUMO2) cross-link. Arg531 is subject to Asymmetric dimethylarginine; alternate. Arg531 bears the Omega-N-methylarginine; alternate mark. Residue Lys543 forms a Glycyl lysine isopeptide (Lys-Gly) (interchain with G-Cter in SUMO2) linkage. Arg551 carries the post-translational modification Omega-N-methylarginine. Arg593 carries the asymmetric dimethylarginine modification. Arg607 is subject to Asymmetric dimethylarginine; alternate. The residue at position 607 (Arg607) is an Omega-N-methylarginine; alternate. Residues Arg614 and Arg620 each carry the asymmetric dimethylarginine modification. Disordered stretches follow at residues Pro657–Ser676, Asn688–Gly707, and Tyr718–Ser834. Positions Pro738 to Arg774 are enriched in low complexity. Basic and acidic residues-rich tracts occupy residues Thr775–Pro794 and Lys808–Arg817. 2 positions are modified to N6-acetyllysine; alternate: Lys778 and Lys784. Glycyl lysine isopeptide (Lys-Gly) (interchain with G-Cter in SUMO2); alternate cross-links involve residues Lys778 and Lys784. A Glycyl lysine isopeptide (Lys-Gly) (interchain with G-Cter in SUMO2) cross-link involves residue Lys789. Glycyl lysine isopeptide (Lys-Gly) (interchain with G-Cter in SUMO2); alternate cross-links involve residues Lys791 and Lys808. Glycyl lysine isopeptide (Lys-Gly) (interchain with G-Cter in SUMO1); alternate cross-links involve residues Lys791 and Lys808. Lys808 is subject to N6-acetyllysine; alternate. Lys811 participates in a covalent cross-link: Glycyl lysine isopeptide (Lys-Gly) (interchain with G-Cter in SUMO2). Phosphoserine is present on Ser818. The span at Leu822–Ser834 shows a compositional bias: low complexity. Position 830 is a phosphothreonine (Thr830). Residue Lys876 forms a Glycyl lysine isopeptide (Lys-Gly) (interchain with G-Cter in SUMO2) linkage. Position 877 is a phosphoserine (Ser877). A PHD-type zinc finger spans residues Glu902–Ile949. Residue Lys966 is modified to N6-acetyllysine. At Lys968 the chain carries N6-acetyllysine; alternate. Lys968 participates in a covalent cross-link: Glycyl lysine isopeptide (Lys-Gly) (interchain with G-Cter in SUMO2); alternate. Residues Gly972–Ile1095 form the Bromo domain. Residues Lys1022 and Lys1058 each participate in a glycyl lysine isopeptide (Lys-Gly) (interchain with G-Cter in SUMO2) cross-link. Thr1066 carries the post-translational modification Phosphothreonine. Residue Lys1072 forms a Glycyl lysine isopeptide (Lys-Gly) (interchain with G-Cter in SUMO2) linkage. The interval Pro1103–Lys1142 is disordered. The span at Phe1107–Phe1124 shows a compositional bias: acidic residues. The residue at position 1117 (Thr1117) is a Phosphothreonine. Ser1120 bears the Phosphoserine mark. Lys1133 participates in a covalent cross-link: Glycyl lysine isopeptide (Lys-Gly) (interchain with G-Cter in SUMO2). Positions Lys1133–Lys1142 are enriched in basic and acidic residues. Residue Ser1134 is modified to Phosphoserine.

Belongs to the TRIM/RBCC family. In terms of assembly, homooligomer and heterooligomer with TRIM24 and TRIM28 family members. Interacts with SMAD4 in unstimulated cells. Found in a complex with SMAD2 and SMAD3 upon addition of TGF-beta. Interacts with SMAD2 and SMAD3. Interacts with SMAD4 under basal and induced conditions and, upon TGF-beta signaling, with activated SMAD2. Forms a ternary complex with SMAD4 and SMAD2 upon TGF-beta signaling. Sumoylated with SUMO1. As to expression, ubiquitous with high level in testis.

The protein resides in the nucleus. It carries out the reaction S-ubiquitinyl-[E2 ubiquitin-conjugating enzyme]-L-cysteine + [acceptor protein]-L-lysine = [E2 ubiquitin-conjugating enzyme]-L-cysteine + N(6)-ubiquitinyl-[acceptor protein]-L-lysine.. The protein operates within protein modification; protein ubiquitination. Its function is as follows. Acts as an E3 ubiquitin-protein ligase. Promotes SMAD4 ubiquitination, nuclear exclusion and degradation via the ubiquitin proteasome pathway. May act as a transcriptional repressor. Inhibits the transcriptional response to TGF-beta/BMP signaling cascade. Plays a role in the control of cell proliferation. Its association with SMAD2 and SMAD3 stimulates erythroid differentiation of hematopoietic stem/progenitor. Monoubiquitinates SMAD4 and acts as an inhibitor of SMAD4-dependent TGF-beta/BMP signaling cascade (Monoubiquitination of SMAD4 hampers its ability to form a stable complex with activated SMAD2/3 resulting in inhibition of TGF-beta/BMP signaling cascade). The polypeptide is E3 ubiquitin-protein ligase TRIM33 (Trim33) (Mus musculus (Mouse)).